The chain runs to 168 residues: Endoribonuclease YbeY (168 aa).

Residues histidine 127, histidine 131, and histidine 137 each coordinate Zn(2+).

This sequence belongs to the endoribonuclease YbeY family. It depends on Zn(2+) as a cofactor.

The protein localises to the cytoplasm. Functionally, single strand-specific metallo-endoribonuclease involved in late-stage 70S ribosome quality control and in maturation of the 3' terminus of the 16S rRNA. The chain is Endoribonuclease YbeY from Chromobacterium violaceum (strain ATCC 12472 / DSM 30191 / JCM 1249 / CCUG 213 / NBRC 12614 / NCIMB 9131 / NCTC 9757 / MK).